A 301-amino-acid chain; its full sequence is Runt-related transcription factor rnt-1 (301 aa).

Residues 10 to 138 (NFIEQQPAPA…TVDGPRDARI (129 aa)) form the Runt domain. Interaction with DNA stretches follow at residues 40-44 (RSNKS), 95-103 (RFVGRSGRG), and 128-137 (VTVDGPRDAR). Positions 99 and 130 each coordinate chloride. The segment at 237–301 (PSIFITPTSD…SSSPTIWRPF (65 aa)) is disordered. Ser255 bears the Phosphoserine mark. Residues 255 to 276 (SPRSITKSSETSINLIQETPES) show a composition bias toward polar residues. The span at 285-301 (VSITSSNSSSPTIWRPF) shows a compositional bias: low complexity.

Interacts with CBFbeta homolog bro-1; acts to increase the affinity and specificity of interaction of rnt-1 with DNA. Interacts with TGF-beta pathway protein sma-4. Post-translationally, may be ubiquitinated in order to be targeted for proteasome-mediated degradation in intestinal cells. May be phosphorylated by members of the p38 MAP kinase pathway. As to expression, expressed in the intestine.

The protein resides in the nucleus. Transcription factor. Binds to regulatory DNA sequences in order to modulate transcription; negatively autoregulates its own expression, perhaps dependent upon CBF beta homolog bro-1. Promotes proliferation, and prevents differentiation, of seam cells, a stem cell-like lineage, acting in concert with bro-1. Required for controlling cell proliferation in the seam cells, perhaps by repressing expression of cyclin-dependent kinase inhibitor cki-1. Inhibition of seam cell differentiation is regulated by rnt-1 and bro-1, perhaps acting upstream of pop-1, by antagonizing pop-1 repressor function. Required for asymmetrical cell divisions in the lineage derived from a posterior embryonic seam cell, the T blast cell, and for asymmetric expression of zinc finger protein tlp-1. Regulates growth and male tail development. Involved in the oxidative stress response, perhaps downstream of the p38 MAP kinase pathway, and acting as part of a negative feedback loop via a transcriptional target gene, tyrosine-protein phosphatase vhp-1. Positively modulates dopaminergic signaling in a non-cell autonomous manner. May be involved in TGF-beta signaling. The chain is Runt-related transcription factor rnt-1 from Caenorhabditis elegans.